The chain runs to 195 residues: HTH-type transcriptional regulator TtmR (195 aa).

An HTH marR-type domain is found at 47–177 (DSQLCFAVYA…LLDNLASMRD (131 aa)). Residues 93-116 (VKEIGSRLFLDSGTLTPLLKRLEA) constitute a DNA-binding region (H-T-H motif).

It is found in the cytoplasm. Functionally, formaldehyde-responsive transcription factor that modulates resistance to stress induced by formaldehyde. Impacts the expression of a number of genes encoding transcription factors and/or involved in stress response, including efgA, and which probably collectively trigger a formaldehyde-specific physiological response. Required for optimal transition to methylotrophy. Not involved in a general stress response. The protein is HTH-type transcriptional regulator TtmR of Methylorubrum extorquens (strain PA1) (Methylobacterium extorquens).